Reading from the N-terminus, the 251-residue chain is Cell division protein ZapD (251 aa).

The protein belongs to the ZapD family. In terms of assembly, interacts with FtsZ.

The protein localises to the cytoplasm. In terms of biological role, cell division factor that enhances FtsZ-ring assembly. Directly interacts with FtsZ and promotes bundling of FtsZ protofilaments, with a reduction in FtsZ GTPase activity. The chain is Cell division protein ZapD from Nitrosomonas eutropha (strain DSM 101675 / C91 / Nm57).